A 273-amino-acid polypeptide reads, in one-letter code: Rhamnulose-1-phosphate aldolase (273 aa).

The active site involves E117. Zn(2+)-binding residues include H140, H142, and H211.

The protein belongs to the aldolase class II family. RhaD subfamily. Requires Zn(2+) as cofactor.

The protein localises to the cytoplasm. The enzyme catalyses L-rhamnulose 1-phosphate = (S)-lactaldehyde + dihydroxyacetone phosphate. Its pathway is carbohydrate degradation; L-rhamnose degradation; glycerone phosphate from L-rhamnose: step 3/3. Functionally, catalyzes the reversible cleavage of L-rhamnulose-1-phosphate to dihydroxyacetone phosphate (DHAP) and L-lactaldehyde. The sequence is that of Rhamnulose-1-phosphate aldolase from Listeria monocytogenes serotype 4b (strain CLIP80459).